A 406-amino-acid chain; its full sequence is Cysteine desulfurase (406 aa).

Lys226 carries the post-translational modification N6-(pyridoxal phosphate)lysine. Catalysis depends on Cys364, which acts as the Cysteine persulfide intermediate.

The protein belongs to the class-V pyridoxal-phosphate-dependent aminotransferase family. Csd subfamily. In terms of assembly, homodimer. Interacts with SufE and the SufBCD complex composed of SufB, SufC and SufD. The interaction with SufE is required to mediate the direct transfer of the sulfur atom from the S-sulfanylcysteine. Requires pyridoxal 5'-phosphate as cofactor.

The protein localises to the cytoplasm. The catalysed reaction is (sulfur carrier)-H + L-cysteine = (sulfur carrier)-SH + L-alanine. It catalyses the reaction L-selenocysteine + AH2 = hydrogenselenide + L-alanine + A + H(+). It participates in cofactor biosynthesis; iron-sulfur cluster biosynthesis. Functionally, cysteine desulfurases mobilize the sulfur from L-cysteine to yield L-alanine, an essential step in sulfur metabolism for biosynthesis of a variety of sulfur-containing biomolecules. Component of the suf operon, which is activated and required under specific conditions such as oxidative stress and iron limitation. Acts as a potent selenocysteine lyase in vitro, that mobilizes selenium from L-selenocysteine. Selenocysteine lyase activity is however unsure in vivo. This Salmonella choleraesuis (strain SC-B67) protein is Cysteine desulfurase.